A 587-amino-acid chain; its full sequence is MSSDRTREVTKRILMVLFGLWLLQFFFLPPLTTRPTELSYSAFLDALEDRRVQEAVVRDRVLQGKMVGGESFTVTLPPDAAGLAERLEEAGVEQRYEVTRTPWWVTLLPTVLWLAVMVGLFAWAQKRQAGAFGLARSTVKPLAPGESPVTFADVAGMDEVKGELEEIVDYLKNPDKYRAIGARIPKGVLLYGPPGTGKTLLARAVAGEAGVPFFALSGSSFVELFVGMGASRVRELFAQARKNAPCIVFIDEIDAVGRQRGSAAVVGGHDEREQTLNQLLTEMDGFGAYEGVIVMAATNRPDVLDKALLRPGRFDRQIPVGPPDAAGREEILRVHAKGKQLDPSLDLAAVARRTPGFTGADLANLLNEAAILAVRRGRSHITMSEIDEAIDRVVAGGPARKGRMIRPEEKRRVAVHEAGHALVATLTPGADPVQKVTIIPRGRAGGFTLTTPEEDQMLYTRSELEARLKMLLGGLAAEEVLLGERSTGAQDDLRRATQVAREMISRYGMGQSVGLMAVPDTDWPGVQNLSQESAAAIEREVQALLDRLYREVRSLIETNRDRLVALVVELSDRETLDGDDVRRILSA.

Over 1–12 (MSSDRTREVTKR) the chain is Cytoplasmic. The chain crosses the membrane as a helical span at residues 13–33 (ILMVLFGLWLLQFFFLPPLTT). Residues 34 to 102 (RPTELSYSAF…EQRYEVTRTP (69 aa)) are Extracellular-facing. The helical transmembrane segment at 103–123 (WWVTLLPTVLWLAVMVGLFAW) threads the bilayer. At 124 to 587 (AQKRQAGAFG…GDDVRRILSA (464 aa)) the chain is on the cytoplasmic side. Position 192–199 (192–199 (GPPGTGKT)) interacts with ATP. His416 is a binding site for Zn(2+). Glu417 is a catalytic residue. Zn(2+) is bound by residues His420 and Asp492.

In the central section; belongs to the AAA ATPase family. This sequence in the C-terminal section; belongs to the peptidase M41 family. Homohexamer. Zn(2+) serves as cofactor.

The protein resides in the cell membrane. Its function is as follows. Acts as a processive, ATP-dependent zinc metallopeptidase for both cytoplasmic and membrane proteins. Plays a role in the quality control of integral membrane proteins. The sequence is that of ATP-dependent zinc metalloprotease FtsH 2 from Symbiobacterium thermophilum (strain DSM 24528 / JCM 14929 / IAM 14863 / T).